The chain runs to 953 residues: Isoleucine--tRNA ligase (953 aa).

The short motif at 58–68 (PYANGSIHIGH) is the 'HIGH' region element. Glutamate 577 provides a ligand contact to L-isoleucyl-5'-AMP. Positions 618 to 622 (KMSKS) match the 'KMSKS' region motif. An ATP-binding site is contributed by lysine 621. Zn(2+)-binding residues include cysteine 916, cysteine 919, cysteine 936, and cysteine 939.

The protein belongs to the class-I aminoacyl-tRNA synthetase family. IleS type 1 subfamily. Monomer. Zn(2+) serves as cofactor.

It is found in the cytoplasm. The enzyme catalyses tRNA(Ile) + L-isoleucine + ATP = L-isoleucyl-tRNA(Ile) + AMP + diphosphate. Its function is as follows. Catalyzes the attachment of isoleucine to tRNA(Ile). As IleRS can inadvertently accommodate and process structurally similar amino acids such as valine, to avoid such errors it has two additional distinct tRNA(Ile)-dependent editing activities. One activity is designated as 'pretransfer' editing and involves the hydrolysis of activated Val-AMP. The other activity is designated 'posttransfer' editing and involves deacylation of mischarged Val-tRNA(Ile). The sequence is that of Isoleucine--tRNA ligase from Aeromonas hydrophila subsp. hydrophila (strain ATCC 7966 / DSM 30187 / BCRC 13018 / CCUG 14551 / JCM 1027 / KCTC 2358 / NCIMB 9240 / NCTC 8049).